Consider the following 222-residue polypeptide: Transcriptional regulatory protein BasR (222 aa).

In terms of domain architecture, Response regulatory spans 2–116; it reads KILIVEDDTL…ELHARIRALL (115 aa). D51 carries the 4-aspartylphosphate modification. Positions 124–218 form a DNA-binding region, ompR/PhoB-type; sequence ESELIVGNLT…VRGFGYMLVA (95 aa).

In terms of assembly, homodimer. Post-translationally, phosphorylated by BasS.

The protein localises to the cytoplasm. Member of the two-component regulatory system BasS/BasR. BasR induces the transcription of the ugd, ais, arnBCADTEF and eptA-basRS loci, all involved in resistance to polymyxin. The polypeptide is Transcriptional regulatory protein BasR (basR) (Escherichia coli (strain K12)).